We begin with the raw amino-acid sequence, 352 residues long: MDYEVSSPIYDIDYGASEPCQKIDVKQMGAQLLPPLYSMVFLFGFVGNMLVVLILINCKRLKSMTDIYLLNLAISDLFFLFTVPFWAHYAAGQWDFGNTMCQFLTGLYFIGFFSGIFFIILLTIDRYLAIVHAVFALKARTVTFGVVTSVITWVVAVFASLPGIIFTRSQKEGYHYTCSPHFPFGQYRFWKNLETLKMVILGLVLPLLVMVICYSGILKTLLRCRNEKKRHRAVRLIFTIMIVYFLFWAPYNIVLLLNTYQEFFGLNNCSSSNRLDQAMQVTETLGMTHCCVNPIIYAFVGEKFRNYLLVFFQKHIAKRFCKCCSIFQKEAPERANSVYTRSTGEQEISVGL.

The Extracellular portion of the chain corresponds to 1-30 (MDYEVSSPIYDIDYGASEPCQKIDVKQMGA). Tyr-3 is subject to Sulfotyrosine. Ser-6 and Ser-7 each carry an O-linked (GalNAc...) serine glycan. Residues Tyr-10 and Tyr-14 each carry the sulfotyrosine modification. Intrachain disulfides connect Cys-20/Cys-269 and Cys-101/Cys-178. The chain crosses the membrane as a helical span at residues 31–58 (QLLPPLYSMVFLFGFVGNMLVVLILINC). The Cytoplasmic segment spans residues 59 to 68 (KRLKSMTDIY). A helical membrane pass occupies residues 69-89 (LLNLAISDLFFLFTVPFWAHY). At 90-102 (AAGQWDFGNTMCQ) the chain is on the extracellular side. A helical transmembrane segment spans residues 103-124 (FLTGLYFIGFFSGIFFIILLTI). Residues 125 to 141 (DRYLAIVHAVFALKART) are Cytoplasmic-facing. Residues 142 to 166 (VTFGVVTSVITWVVAVFASLPGIIF) traverse the membrane as a helical segment. The Extracellular segment spans residues 167–198 (TRSQKEGYHYTCSPHFPFGQYRFWKNLETLKM). Residues 199–218 (VILGLVLPLLVMVICYSGIL) form a helical membrane-spanning segment. Topologically, residues 219 to 235 (KTLLRCRNEKKRHRAVR) are cytoplasmic. Residues 236–260 (LIFTIMIVYFLFWAPYNIVLLLNTY) form a helical membrane-spanning segment. Residues 261–277 (QEFFGLNNCSSSNRLDQ) are Extracellular-facing. Residues 278 to 301 (AMQVTETLGMTHCCVNPIIYAFVG) traverse the membrane as a helical segment. Topologically, residues 302 to 352 (EKFRNYLLVFFQKHIAKRFCKCCSIFQKEAPERANSVYTRSTGEQEISVGL) are cytoplasmic. S-palmitoyl cysteine attachment occurs at residues Cys-321, Cys-323, and Cys-324. Phosphoserine; by BARK1 occurs at positions 337, 342, and 349.

This sequence belongs to the G-protein coupled receptor 1 family. As to quaternary structure, interacts with PRAF2. Efficient ligand binding to CCL3/MIP-1alpha and CCL4/MIP-1beta requires sulfation, O-glycosylation and sialic acid modifications. Glycosylation on Ser-6 is required for efficient binding of CCL4. Interacts with GRK2. Interacts with ARRB1 and ARRB2. Interacts with CNIH4. Interacts with S100A4; this interaction stimulates T-lymphocyte chemotaxis. In terms of processing, sulfated on at least 2 of the N-terminal tyrosines. Sulfation is required for efficient binding of the chemokines, CCL3 and CCL4. Palmitoylation in the C-terminal is important for cell surface expression. Post-translationally, phosphorylation on serine residues in the C-terminal is stimulated by binding CC chemokines especially by APO-RANTES. In terms of processing, O-glycosylated, but not N-glycosylated. Ser-6 appears to be the major site even if Ser-7 may be also O-glycosylated. Also sialylated glycans present which contribute to chemokine binding. Ser-17 may also be glycosylated and, if so, with small moieties such as a T-antigen.

It is found in the cell membrane. Receptor for a number of inflammatory CC-chemokines including CCL3/MIP-1-alpha, CCL4/MIP-1-beta and RANTES and subsequently transduces a signal by increasing the intracellular calcium ion level. May play a role in the control of granulocytic lineage proliferation or differentiation. Participates in T-lymphocyte migration to the infection site by acting as a chemotactic receptor. The chain is C-C chemokine receptor type 5 (CCR5) from Plecturocebus moloch (Dusky titi monkey).